Here is a 635-residue protein sequence, read N- to C-terminus: Two-component response regulator ARR18 (635 aa).

The 115-residue stretch at 19-133 (RVLAVDDNPT…ELQNIWHHVV (115 aa)) folds into the Response regulatory domain. Position 70 is a 4-aspartylphosphate (aspartate 70). 2 disordered regions span residues 144–196 (LPPS…KKPR) and 323–342 (IQQG…GTYH). Residues 166–186 (SGDEDDSDREEDDGEGSEQDG) show a composition bias toward acidic residues. A Nuclear localization signal motif is present at residues 193-196 (KKPR). Residues 196-246 (RVVWSQELHQKFVSAVQQLGLDKAVPKKILDLMSIEGLTRENVASHLQKYR) constitute a DNA-binding region (myb-like GARP).

It belongs to the ARR family. Type-B subfamily. Binds the target DNA as a monomer. Two-component system major event consists of a His-to-Asp phosphorelay between a sensor histidine kinase (HK) and a response regulator (RR). In plants, the His-to-Asp phosphorelay involves an additional intermediate named Histidine-containing phosphotransfer protein (HPt). This multistep phosphorelay consists of a His-Asp-His-Asp sequential transfer of a phosphate group between first a His and an Asp of the HK protein, followed by the transfer to a conserved His of the HPt protein and finally the transfer to an Asp in the receiver domain of the RR protein. In terms of tissue distribution, predominantly expressed in young leaf tissue developing anthers, and siliques.

The protein localises to the nucleus. Its function is as follows. Transcriptional activator that binds specifically to the DNA sequence 5'-[AG]GATT-3'. Functions as a response regulator involved in His-to-Asp phosphorelay signal transduction system. Phosphorylation of the Asp residue in the receiver domain activates the ability of the protein to promote the transcription of target genes. Could directly activate some type-A response regulators in response to cytokinins. In Arabidopsis thaliana (Mouse-ear cress), this protein is Two-component response regulator ARR18 (ARR18).